The following is a 360-amino-acid chain: Aurora kinase B (360 aa).

In terms of domain architecture, Protein kinase spans 93–343; sequence FDIGRPLGKG…LKGVMEHPWV (251 aa). Residues 99-107 and K122 contribute to the ATP site; that span reads LGKGKFGNV. Catalysis depends on D216, which acts as the Proton acceptor.

It belongs to the protein kinase superfamily. Ser/Thr protein kinase family. Aurora subfamily. In terms of assembly, component of the chromosomal passenger complex (CPC).

It is found in the nucleus. Its subcellular location is the chromosome. The protein localises to the centromere. The protein resides in the cytoplasm. It localises to the cytoskeleton. It is found in the spindle. Its subcellular location is the midbody. It catalyses the reaction L-seryl-[protein] + ATP = O-phospho-L-seryl-[protein] + ADP + H(+). The catalysed reaction is L-threonyl-[protein] + ATP = O-phospho-L-threonyl-[protein] + ADP + H(+). Kinase activity is stimulated by cell-cycle specific phosphorylation. Functionally, serine/threonine-protein kinase component of the chromosomal passenger complex (CPC), a complex that acts as a key regulator of mitosis. The CPC complex has essential functions at the centromere in ensuring correct chromosome alignment and segregation and is required for chromatin-induced microtubule stabilization and spindle assembly. Involved in the bipolar attachment of spindle microtubules to kinetochores and is a key regulator for the onset of cytokinesis during mitosis. Required for central/midzone spindle assembly and cleavage furrow formation. Key component of the cytokinesis checkpoint, a process required to delay abscission to prevent both premature resolution of intercellular chromosome bridges and accumulation of DNA damage. Phosphorylates 'Ser-10' of histone H3 during mitosis. This chain is Aurora kinase B, found in Xenopus tropicalis (Western clawed frog).